Consider the following 352-residue polypeptide: Biotin synthase (352 aa).

A Radical SAM core domain is found at 41 to 268 (NEVQVSTLLS…ASHVRLSAGR (228 aa)). Positions 56, 60, and 63 each coordinate [4Fe-4S] cluster. 4 residues coordinate [2Fe-2S] cluster: Cys100, Cys131, Cys191, and Arg263.

It belongs to the radical SAM superfamily. Biotin synthase family. As to quaternary structure, homodimer. [4Fe-4S] cluster serves as cofactor. [2Fe-2S] cluster is required as a cofactor.

It catalyses the reaction (4R,5S)-dethiobiotin + (sulfur carrier)-SH + 2 reduced [2Fe-2S]-[ferredoxin] + 2 S-adenosyl-L-methionine = (sulfur carrier)-H + biotin + 2 5'-deoxyadenosine + 2 L-methionine + 2 oxidized [2Fe-2S]-[ferredoxin]. It functions in the pathway cofactor biosynthesis; biotin biosynthesis; biotin from 7,8-diaminononanoate: step 2/2. Its function is as follows. Catalyzes the conversion of dethiobiotin (DTB) to biotin by the insertion of a sulfur atom into dethiobiotin via a radical-based mechanism. The polypeptide is Biotin synthase (Marinobacter nauticus (strain ATCC 700491 / DSM 11845 / VT8) (Marinobacter aquaeolei)).